Consider the following 31-residue polypeptide: Cyclotide vibi-G (31 aa).

Positions 1 to 31 (GTFPCGESCVFIPCLTSAIGCSCKSKVCYKN) form a cross-link, cyclopeptide (Gly-Asn). Intrachain disulfides connect cysteine 5-cysteine 21, cysteine 9-cysteine 23, and cysteine 14-cysteine 28.

In terms of processing, this is a cyclic peptide.

Probably participates in a plant defense mechanism. Has cytotoxic activity, active against a human lymphoma cell line with an IC(50) of 0.96 uM. The polypeptide is Cyclotide vibi-G (Viola biflora (Yellow wood violet)).